The chain runs to 227 residues: Enolase-phosphatase E1 (227 aa).

The protein belongs to the HAD-like hydrolase superfamily. MasA/MtnC family. As to quaternary structure, monomer. Mg(2+) serves as cofactor.

It catalyses the reaction 5-methylsulfanyl-2,3-dioxopentyl phosphate + H2O = 1,2-dihydroxy-5-(methylsulfanyl)pent-1-en-3-one + phosphate. The protein operates within amino-acid biosynthesis; L-methionine biosynthesis via salvage pathway; L-methionine from S-methyl-5-thio-alpha-D-ribose 1-phosphate: step 3/6. It participates in amino-acid biosynthesis; L-methionine biosynthesis via salvage pathway; L-methionine from S-methyl-5-thio-alpha-D-ribose 1-phosphate: step 4/6. Bifunctional enzyme that catalyzes the enolization of 2,3-diketo-5-methylthiopentyl-1-phosphate (DK-MTP-1-P) into the intermediate 2-hydroxy-3-keto-5-methylthiopentenyl-1-phosphate (HK-MTPenyl-1-P), which is then dephosphorylated to form the acireductone 1,2-dihydroxy-3-keto-5-methylthiopentene (DHK-MTPene). This Methylococcus capsulatus (strain ATCC 33009 / NCIMB 11132 / Bath) protein is Enolase-phosphatase E1.